Consider the following 149-residue polypeptide: Small ribosomal subunit protein uS15 (149 aa).

Positions 1 to 11 (MARMHSRDRGK) are enriched in basic and acidic residues. Residues 1–25 (MARMHSRDRGKSGSTRPPRVAPPSW) form a disordered region.

It belongs to the universal ribosomal protein uS15 family. Part of the 30S ribosomal subunit.

This Methanopyrus kandleri (strain AV19 / DSM 6324 / JCM 9639 / NBRC 100938) protein is Small ribosomal subunit protein uS15.